We begin with the raw amino-acid sequence, 220 residues long: Probable 26S proteasome regulatory subunit p27 (220 aa).

Residues 119–196 (ARRNNDDQAI…PVLLLREGQI (78 aa)) enclose the PDZ domain.

Belongs to the proteasome subunit p27 family. As to quaternary structure, part of a transient complex containing NAS2, RPT4 and RPT5 formed during the assembly of the 26S proteasome.

Acts as a chaperone during the assembly of the 26S proteasome, specifically of the base subcomplex of the 19S regulatory complex (RC). During the base subcomplex assembly is part of a NAS2:RPT4:RPT5 module; NAS2 is released during the further base assembly process. The chain is Probable 26S proteasome regulatory subunit p27 (NAS2) from Saccharomyces cerevisiae (strain ATCC 204508 / S288c) (Baker's yeast).